The sequence spans 125 residues: Small ribosomal subunit protein uS11 (125 aa).

The protein belongs to the universal ribosomal protein uS11 family. Part of the 30S ribosomal subunit. Interacts with proteins S7 and S18. Binds to IF-3.

Located on the platform of the 30S subunit, it bridges several disparate RNA helices of the 16S rRNA. Forms part of the Shine-Dalgarno cleft in the 70S ribosome. The chain is Small ribosomal subunit protein uS11 from Aquifex aeolicus (strain VF5).